The primary structure comprises 413 residues: NPL4-like protein 2 (413 aa).

Ser104 carries the phosphoserine modification. The MPN domain occupies 131–272 (SVSFDRDAAN…ADVHFEAFQM (142 aa)).

This sequence belongs to the NPL4 family.

Its pathway is protein degradation; proteasomal ubiquitin-dependent pathway. In terms of biological role, may be part of a complex that binds ubiquitinated proteins and that is necessary for the export of misfolded proteins from the ER to the cytoplasm, where they are degraded by the proteasome. This is NPL4-like protein 2 from Arabidopsis thaliana (Mouse-ear cress).